The following is a 622-amino-acid chain: MDATPYTTSSTSTALDSPSSLSATMARRWARKLERYCCTCVTYFPLAFVYSMTSWAAYVDVSLSTTPSRVTWLGHSYGFIAVVLYLLANWCYTYAVFTSPGSTTNEYGYSTLPTQAPPTATSFTVKSNGEFRFCKKCQARKPDRAHHCSTCRRCVLKMDHHCPWLATCVGLRNHKAFLLFLIYTSVFCWVSFAGSASWVWEEIMSNTTYVETLMPVNYIMLSVISGIIGIVLSAFCGWHIYLASRGQTTIECLEKTRYLSPLRESMQRTYVNQHTPGQGIALPKYGQQLLDIHQNTIPGVTRPEEGEEMRRMTTPSGSSQRNDLASQHNPELQAGSRRFTYDEMEHIRARKRYEDYLDEQDSTKLPHAFDLGTPRNLLHLFGTNAWLWPFPVCTTIGDGWSWEPNPKWIEARDRIAREREEQRQRERQAGWGPADDDDITPVYTPTWTPPNQQHPQGGAGRHYLQPSSQPQTQRNSNSSSPSFTPSRRTPSKADRILGRDPNMYADDEPVIYGKHDVAMSRLSPAGRTLVVEDDVLNDDDDDDEDYFQDAGRKQEDAEQSALNVVTNGRWGRPAGASGVGLLAHGRPGGARSPISPISPPARGFGGSAKNGEEGRSNDDGVD.

The Cytoplasmic portion of the chain corresponds to 1–38 (MDATPYTTSSTSTALDSPSSLSATMARRWARKLERYCC). Residues 39–59 (TCVTYFPLAFVYSMTSWAAYV) form a helical membrane-spanning segment. At 60–76 (DVSLSTTPSRVTWLGHS) the chain is on the vacuolar side. Residues 77-97 (YGFIAVVLYLLANWCYTYAVF) form a helical membrane-spanning segment. Residues 98–175 (TSPGSTTNEY…ATCVGLRNHK (78 aa)) lie on the Cytoplasmic side of the membrane. Positions 132–182 (RFCKKCQARKPDRAHHCSTCRRCVLKMDHHCPWLATCVGLRNHKAFLLFLI) constitute a DHHC domain. A helical transmembrane segment spans residues 176 to 196 (AFLLFLIYTSVFCWVSFAGSA). At 197-217 (SWVWEEIMSNTTYVETLMPVN) the chain is on the vacuolar side. Residues 218-238 (YIMLSVISGIIGIVLSAFCGW) traverse the membrane as a helical segment. At 239-622 (HIYLASRGQT…EGRSNDDGVD (384 aa)) the chain is on the cytoplasmic side. Disordered regions lie at residues 298–334 (PGVT…ELQA), 419–507 (REEQ…YADD), and 533–622 (DDVL…DGVD). Positions 302–311 (RPEEGEEMRR) are enriched in basic and acidic residues. Polar residues predominate over residues 313–330 (TTPSGSSQRNDLASQHNP). Positions 419–428 (REEQRQRERQ) are enriched in basic and acidic residues. Over residues 443 to 455 (YTPTWTPPNQQHP) the composition is skewed to polar residues. The span at 466-488 (PSSQPQTQRNSNSSSPSFTPSRR) shows a compositional bias: low complexity. Acidic residues predominate over residues 533–547 (DDVLNDDDDDDEDYF). Residues 610 to 622 (NGEEGRSNDDGVD) show a composition bias toward basic and acidic residues.

Belongs to the DHHC palmitoyltransferase family. PFA3 subfamily. Post-translationally, autopalmitoylated.

It is found in the vacuole membrane. It catalyses the reaction L-cysteinyl-[protein] + hexadecanoyl-CoA = S-hexadecanoyl-L-cysteinyl-[protein] + CoA. Palmitoyltransferase specific for vac8. Palmitoylates vac8 at one or more of its N-terminal cysteine residues, which is required for its proper membrane localization. In Neurospora crassa (strain ATCC 24698 / 74-OR23-1A / CBS 708.71 / DSM 1257 / FGSC 987), this protein is Palmitoyltransferase pfa3 (ptr-3).